Reading from the N-terminus, the 296-residue chain is Developmental pluripotency-associated protein 4 (296 aa).

The segment covering 1–13 (METAGDKKWSAEE) has biased composition (basic and acidic residues). The segment at 1-73 (METAGDKKWS…QTRRKVPIPP (73 aa)) is disordered. Residues 23–34 (SSQPSTAPAKAK) are compositionally biased toward low complexity. Residues 42–58 (KSETDNGCKPKEGKPQD) are compositionally biased toward basic and acidic residues.

In terms of assembly, interacts with DPPA2. Interacts with PCGF1. As to expression, expressed in pluripotent embryonic cells, but not in differentiated somatic tissues.

The protein localises to the nucleus. Its function is as follows. May be involved in the maintenance of active epigenetic status of target genes. May inhibit differentiation of embryonic stem (ES) cells into a primitive ectoderm lineage. This is Developmental pluripotency-associated protein 4 (Dppa4) from Mus musculus (Mouse).